We begin with the raw amino-acid sequence, 74 residues long: Putative antitoxin VapB48 (74 aa).

Possibly the antitoxin component of a type II toxin-antitoxin (TA) system. Its cognate toxin is VapC48 (Potential). In Mycobacterium tuberculosis (strain CDC 1551 / Oshkosh), this protein is Putative antitoxin VapB48 (vapB48).